We begin with the raw amino-acid sequence, 157 residues long: Ribosome maturation factor RimP (157 aa).

The protein belongs to the RimP family.

The protein resides in the cytoplasm. Required for maturation of 30S ribosomal subunits. The chain is Ribosome maturation factor RimP from Ligilactobacillus salivarius (strain UCC118) (Lactobacillus salivarius).